The primary structure comprises 190 residues: Protein LZIC (190 aa).

Positions 2-63 form a coiled coil; sequence ASRGKTETSK…SEFNDSLKKI (62 aa).

It belongs to the CTNNBIP1 family. In terms of assembly, does not interact with CTNNB1. Ubiquitously expressed, with highest levels in kidney. Up-regulated in several cases of gastric cancers.

The polypeptide is Protein LZIC (LZIC) (Homo sapiens (Human)).